Consider the following 229-residue polypeptide: Sodium channel modifier 1 (229 aa).

Residue S2 is modified to Phosphoserine. A Bipartite nuclear localization signal motif is present at residues 4–20; the sequence is KREGDDWSQLNVLKKRR. Residues 42 to 74 form a Matrin-type zinc finger; it reads FACAICPHRPVLDTLAMLTAHRAGKKHLSSLKL. K67 is covalently cross-linked (Glycyl lysine isopeptide (Lys-Gly) (interchain with G-Cter in SUMO2)). Disordered stretches follow at residues 80–105 and 128–187; these read QTGK…EAPL and RRKH…TKRR. Residues 82-92 show a composition bias toward polar residues; that stretch reads GKGTEQNPRQQ. Positions 157–171 are enriched in basic and acidic residues; sequence ISKEPEPRERSDAKE. Phosphoserine is present on residues S182 and S218. Residues 187 to 229 are required for interaction with LUC7L2; it reads RVLNHYLTLRSSGWVPDGRGRWIKDENVEFDSDEEEPPDLPLD.

Component of the minor spliceosome. Within this complex, interacts with RNF113A, as well as with SF3B1/SF3b155, SF3B2/SF3b145, SF3B3/SF3b130 and CDC5L. May interact with LUC7L2 and SNRNP70.

The protein localises to the nucleus. The protein resides in the nucleoplasm. It localises to the nucleus speckle. Its function is as follows. As a component of the minor spliceosome, involved in the splicing of U12-type introns in pre-mRNAs. Plays a role in the regulation of primary cilia length and Hedgehog signaling. The polypeptide is Sodium channel modifier 1 (Scnm1) (Mus musculus (Mouse)).